We begin with the raw amino-acid sequence, 213 residues long: Bcl-2-related ovarian killer protein (213 aa).

The short motif at 32 to 44 (KALCRDYINSRLI) is the BH4 element. The short motif at 67–83 (VSAILLRLGDELEYIRP) is the BH3 element. Residues 113-132 (QIFTAGITWGKVVSLYAVAA) carry the BH1 motif. The BH2 signature appears at 165-179 (WLKRRGGWADITKCV). Residues 190–210 (WLVAAVCSFGHFLKAIFFVLL) form a helical membrane-spanning segment.

This sequence belongs to the Bcl-2 family.

It localises to the membrane. May play a role in apoptosis. The sequence is that of Bcl-2-related ovarian killer protein from Gallus gallus (Chicken).